A 2359-amino-acid polypeptide reads, in one-letter code: Voltage-dependent T-type calcium channel subunit alpha-1H (2359 aa).

The disordered stretch occupies residues 1 to 63; it reads MTEGTLAADE…PGTECGADLG (63 aa). The Cytoplasmic portion of the chain corresponds to 1-100; that stretch reads MTEGTLAADE…SWCLRLVCNP (100 aa). A compositionally biased stretch (low complexity) spans 24 to 36; the sequence is APVRASPASPGAP. The stretch at 87–422 is one I repeat; sequence TRPRSWCLRL…LCLVVIATQF (336 aa). A helical transmembrane segment spans residues 101–119; the sequence is WFEHISMLVIMLNCVTLGM. Over 120-141 the chain is Extracellular; it reads FRPCEDVECRSERCSILEAFDD. Zn(2+) is bound at residue aspartate 140. Residues 142 to 160 traverse the membrane as a helical segment; the sequence is FIFAFFAVEMVIKMVALGL. The Cytoplasmic segment spans residues 161-169; sequence FGQKCYLGD. The helical transmembrane segment at 170–184 threads the bilayer; that stretch reads TWNRLDFFIVMAGMM. The Extracellular portion of the chain corresponds to 185–193; the sequence is EYSLDGHNV. Zn(2+) is bound by residues aspartate 189 and histidine 191. A glycan (N-linked (GlcNAc...) asparagine) is linked at asparagine 192. Residues 194–212 traverse the membrane as a helical segment; the sequence is SLSAIRTVRVLRPLRAINR. The Cytoplasmic segment spans residues 213–232; that stretch reads VPSMRILVTLLLDTLPMLGN. Residues 233-253 form a helical membrane-spanning segment; the sequence is VLLLCFFVFFIFGIVGVQLWA. The Extracellular portion of the chain corresponds to 254-394; the sequence is GLLRNRCFLD…YYVMDAHSFY (141 aa). An N-linked (GlcNAc...) asparagine glycan is attached at asparagine 271. A helical transmembrane segment spans residues 395-419; it reads NFIYFILLIIMGSFFMINLCLVVIA. Residues 420 to 790 lie on the Cytoplasmic side of the membrane; sequence TQFSETKQRE…GKLRRIVDSK (371 aa). Disordered regions lie at residues 490-573, 620-656, and 737-769; these read VDPS…SESV, GTVN…SPRP, and GDCR…ASQP. Basic residues predominate over residues 503–532; it reads RRPRRAGRRTASVHHLVYHHHHHHHHHYHF. Residues 557-566 are compositionally biased toward pro residues; it reads PPSPPSPGHG. Polar residues predominate over residues 620-631; the sequence is GTVNSKGGTSSR. The stretch at 776-1015 is one II repeat; the sequence is WASFSGKLRR…LLVAILVEGF (240 aa). A helical membrane pass occupies residues 791–811; that stretch reads YFNRGIMAAILVNTLSMGVEY. Topologically, residues 812–824 are extracellular; sequence HEQPEELTNALEI. Residues 825 to 846 traverse the membrane as a helical segment; it reads SNIVFTSMFALEMLLKLLACGP. Residues 847 to 852 are Cytoplasmic-facing; that stretch reads LGYIRN. Residues 853–871 traverse the membrane as a helical segment; sequence PYNIFDGIVVVISVWEIVG. Over 872 to 879 the chain is Extracellular; that stretch reads QANGGLSV. Residues 880-903 form a helical membrane-spanning segment; the sequence is LRTFRLLRVLKLVRFLPALRRQLV. Residues 904-914 lie on the Cytoplasmic side of the membrane; it reads VLMRTMDNVAT. The chain crosses the membrane as a helical span at residues 915–935; it reads FCMLLMLFIFIFSILGMHLFG. Residues 936 to 987 lie on the Extracellular side of the membrane; it reads CKFSLKTDSGDTVPDRKNFDSLLWAIVTVFQILTQEDWNVVLYNGMASTSSW. Residues 988–1012 form a helical membrane-spanning segment; the sequence is AALYFVALMTFGNYVLFNLLVAILV. The Cytoplasmic segment spans residues 1013–1301; the sequence is EGFQAEGDAT…NRLRVSCQKV (289 aa). Positions 1061–1197 are disordered; the sequence is GHLEGRGSLP…GASPGPRATP (137 aa). Polar residues predominate over residues 1117–1126; it reads SLASLRSSPC. Residues 1130–1147 are compositionally biased toward low complexity; that stretch reads GPNSAGSSRRSSWNSLGR. An III repeat occupies 1292-1569; it reads NRLRVSCQKV…MFVGVVVENF (278 aa). The helical transmembrane segment at 1302 to 1324 threads the bilayer; it reads IAHKMFDHVVLVFIFLNCITIAL. Topologically, residues 1325–1342 are extracellular; it reads ERPDIDPGSTERAFLSVS. Residues 1343–1363 form a helical membrane-spanning segment; it reads NYIFTAIFVVEMMVKVVALGL. Topologically, residues 1364–1373 are cytoplasmic; it reads LWGEHAYLQS. The chain crosses the membrane as a helical span at residues 1374–1393; it reads SWNVLDGLLVLVSLVDIIVA. At 1394–1407 the chain is on the extracellular side; the sequence is MASAGGAKILGVLR. The chain crosses the membrane as a helical span at residues 1408–1429; the sequence is VLRLLRTLRPLRVISRAPGLKL. The Cytoplasmic segment spans residues 1430 to 1439; the sequence is VVETLISSLR. A helical transmembrane segment spans residues 1440-1463; sequence PIGNIVLICCAFFIIFGILGVQLF. At 1464 to 1540 the chain is on the extracellular side; it reads KGKFYYCEGT…DQQPVQNHNP (77 aa). Residue asparagine 1477 is glycosylated (N-linked (GlcNAc...) asparagine). Residues 1541 to 1566 form a helical membrane-spanning segment; the sequence is WMLLYFISFLLIVSFFVLNMFVGVVV. Residues 1567 to 1621 are Cytoplasmic-facing; the sequence is ENFHKCRQHQEAEEARRREEKRLRRLERRRRKAQRRPYYADYSHTRRSIHSLCTS. The stretch at 1607–1868 is one IV repeat; it reads DYSHTRRSIH…VVVAVLMKHL (262 aa). Residues 1622-1642 form a helical membrane-spanning segment; the sequence is HYLDLFITFIICLNVITMSME. Residues 1643–1656 are Extracellular-facing; it reads HYNQPKSLDEALKY. A helical membrane pass occupies residues 1657–1678; the sequence is CNYVFTIVFVFEAALKLVAFGF. Residues 1679–1685 are Cytoplasmic-facing; it reads RRFFKDR. Residues 1686–1704 traverse the membrane as a helical segment; that stretch reads WNQLDLAIVLLSIMGIALE. Residues 1705–1718 are Extracellular-facing; the sequence is EIEMNAALPINPTI. A helical membrane pass occupies residues 1719 to 1742; sequence IRIMRVLRIARVLKLLKMATGMRA. The Cytoplasmic portion of the chain corresponds to 1743–1756; sequence LLDTVVQALPQVGN. Residues 1757 to 1777 form a helical membrane-spanning segment; it reads LGLLFMLLFFIYAALGVELFG. Residues 1778 to 1840 lie on the Extracellular side of the membrane; sequence RLECSEDNPC…KHCLSYLPAL (63 aa). Residues 1841-1868 form a helical membrane-spanning segment; that stretch reads SPVYFVTFMLVAQFVLVNVVVAVLMKHL. The Cytoplasmic segment spans residues 1869-2359; it reads EESNKEARED…APDDSGDEPV (491 aa). A compositionally biased stretch (polar residues) spans 1891 to 1911; that stretch reads QGSTAQPPPTAQESQGTQPDT. 4 disordered regions span residues 1891-1913, 1974-2003, 2016-2258, and 2335-2359; these read QGST…DTPN, SFQV…PRSL, HSES…GERW, and PQTP…DEPV. Over residues 2016–2026 the composition is skewed to basic and acidic residues; the sequence is HSESLEGKVDD. Residues 2086–2096 are compositionally biased toward acidic residues; the sequence is DEAEAADPADE. Residues 2166 to 2181 are compositionally biased toward basic and acidic residues; that stretch reads GESHLESGEVRGRASE.

This sequence belongs to the calcium channel alpha-1 subunit (TC 1.A.1.11) family. CACNA1H subfamily. In terms of assembly, interacts (via N-terminal cytoplasmic domain) with STAC. In terms of processing, in response to raising of intracellular calcium, the T-type channels are activated by CaM-kinase II. In terms of tissue distribution, expressed in brain.

It is found in the cell membrane. The enzyme catalyses Ca(2+)(in) = Ca(2+)(out). Voltage-sensitive calcium channel that gives rise to T-type calcium currents. T-type calcium channels belong to the 'low-voltage activated (LVA)' group. A particularity of this type of channel is an opening at quite negative potentials, and a voltage-dependent inactivation. T-type channels serve pacemaking functions in both central neurons and cardiac nodal cells and support calcium signaling in secretory cells and vascular smooth muscle. They may also be involved in the modulation of firing patterns of neurons. In the adrenal zona glomerulosa, participates in the signaling pathway leading to aldosterone production in response to either AGT/angiotensin II, or hyperkalemia. The polypeptide is Voltage-dependent T-type calcium channel subunit alpha-1H (Cacna1h) (Rattus norvegicus (Rat)).